The chain runs to 341 residues: 33 kDa chaperonin (341 aa).

Intrachain disulfides connect C245–C247 and C278–C281.

It belongs to the HSP33 family. Under oxidizing conditions two disulfide bonds are formed involving the reactive cysteines. Under reducing conditions zinc is bound to the reactive cysteines and the protein is inactive.

Its subcellular location is the cytoplasm. Its function is as follows. Redox regulated molecular chaperone. Protects both thermally unfolding and oxidatively damaged proteins from irreversible aggregation. Plays an important role in the bacterial defense system toward oxidative stress. The protein is 33 kDa chaperonin of Thermus thermophilus (strain ATCC 27634 / DSM 579 / HB8).